Here is a 319-residue protein sequence, read N- to C-terminus: tRNA uridine(34) hydroxylase (319 aa).

Residues 133–231 form the Rhodanese domain; it reads EDPNSVVIDT…YLEDVSSENS (99 aa). Cys191 acts as the Cysteine persulfide intermediate in catalysis.

It belongs to the TrhO family.

It carries out the reaction uridine(34) in tRNA + AH2 + O2 = 5-hydroxyuridine(34) in tRNA + A + H2O. In terms of biological role, catalyzes oxygen-dependent 5-hydroxyuridine (ho5U) modification at position 34 in tRNAs. The chain is tRNA uridine(34) hydroxylase from Prochlorococcus marinus (strain NATL2A).